A 1343-amino-acid chain; its full sequence is DNA-directed RNA polymerase subunit beta (1343 aa).

This sequence belongs to the RNA polymerase beta chain family. The RNAP catalytic core consists of 2 alpha, 1 beta, 1 beta' and 1 omega subunit. When a sigma factor is associated with the core the holoenzyme is formed, which can initiate transcription.

The catalysed reaction is RNA(n) + a ribonucleoside 5'-triphosphate = RNA(n+1) + diphosphate. In terms of biological role, DNA-dependent RNA polymerase catalyzes the transcription of DNA into RNA using the four ribonucleoside triphosphates as substrates. This is DNA-directed RNA polymerase subunit beta from Shewanella sediminis (strain HAW-EB3).